A 96-amino-acid chain; its full sequence is uncharacterized protein (96 aa).

Residues 1–30 form the signal peptide; the sequence is MLILSVFCAVFYAFLTAIVANFSLKTLAIG. The Extracellular segment spans residues 31-54; the sequence is ATFVKSHLKSNPIPYGDLVADSLD. The chain crosses the membrane as a helical span at residues 55 to 75; it reads FGNITPTVTLLFAILIAVLAL. The Cytoplasmic segment spans residues 76-96; the sequence is KCEFSCSTSAPAGQASGRKVK.

It is found in the membrane. This is an uncharacterized protein from Dictyostelium discoideum (Social amoeba).